The primary structure comprises 308 residues: D-alanine--D-alanine ligase (308 aa).

The 201-residue stretch at lysine 102–glutamate 302 folds into the ATP-grasp domain. Residue proline 128–threonine 183 coordinates ATP. Aspartate 252, glutamate 269, and asparagine 271 together coordinate Mg(2+).

Belongs to the D-alanine--D-alanine ligase family. It depends on Mg(2+) as a cofactor. Mn(2+) is required as a cofactor.

The protein localises to the cytoplasm. It catalyses the reaction 2 D-alanine + ATP = D-alanyl-D-alanine + ADP + phosphate + H(+). It participates in cell wall biogenesis; peptidoglycan biosynthesis. Cell wall formation. The chain is D-alanine--D-alanine ligase from Brucella anthropi (strain ATCC 49188 / DSM 6882 / CCUG 24695 / JCM 21032 / LMG 3331 / NBRC 15819 / NCTC 12168 / Alc 37) (Ochrobactrum anthropi).